The sequence spans 240 residues: Pyridoxine 5'-phosphate synthase (240 aa).

Residue Asn-7 coordinates 3-amino-2-oxopropyl phosphate. 9-10 (DH) provides a ligand contact to 1-deoxy-D-xylulose 5-phosphate. Arg-18 contacts 3-amino-2-oxopropyl phosphate. The active-site Proton acceptor is the His-43. The 1-deoxy-D-xylulose 5-phosphate site is built by Arg-45 and His-50. Glu-70 acts as the Proton acceptor in catalysis. 1-deoxy-D-xylulose 5-phosphate is bound at residue Thr-100. The Proton donor role is filled by His-191. 3-amino-2-oxopropyl phosphate is bound by residues Gly-192 and 213-214 (GH).

The protein belongs to the PNP synthase family. As to quaternary structure, homooctamer; tetramer of dimers.

Its subcellular location is the cytoplasm. The enzyme catalyses 3-amino-2-oxopropyl phosphate + 1-deoxy-D-xylulose 5-phosphate = pyridoxine 5'-phosphate + phosphate + 2 H2O + H(+). Its pathway is cofactor biosynthesis; pyridoxine 5'-phosphate biosynthesis; pyridoxine 5'-phosphate from D-erythrose 4-phosphate: step 5/5. Catalyzes the complicated ring closure reaction between the two acyclic compounds 1-deoxy-D-xylulose-5-phosphate (DXP) and 3-amino-2-oxopropyl phosphate (1-amino-acetone-3-phosphate or AAP) to form pyridoxine 5'-phosphate (PNP) and inorganic phosphate. The sequence is that of Pyridoxine 5'-phosphate synthase from Microcystis aeruginosa (strain NIES-843 / IAM M-2473).